A 536-amino-acid chain; its full sequence is Phosphoenolpyruvate carboxykinase (ATP) (536 aa).

Residues Arg61, Tyr195, and Lys201 each coordinate substrate. ATP-binding positions include Lys201, His220, and 236–244; that span reads GLSGTGKTT. Mn(2+)-binding residues include Lys201 and His220. Asp257 is a Mn(2+) binding site. The ATP site is built by Glu285, Arg323, and Thr448. Arg323 serves as a coordination point for substrate.

It belongs to the phosphoenolpyruvate carboxykinase (ATP) family. It depends on Mn(2+) as a cofactor.

Its subcellular location is the cytoplasm. The enzyme catalyses oxaloacetate + ATP = phosphoenolpyruvate + ADP + CO2. The protein operates within carbohydrate biosynthesis; gluconeogenesis. Involved in the gluconeogenesis. Catalyzes the conversion of oxaloacetate (OAA) to phosphoenolpyruvate (PEP) through direct phosphoryl transfer between the nucleoside triphosphate and OAA. This is Phosphoenolpyruvate carboxykinase (ATP) from Methylobacterium nodulans (strain LMG 21967 / CNCM I-2342 / ORS 2060).